Here is a 341-residue protein sequence, read N- to C-terminus: Golgi-associated RAB2 interactor protein 1B (341 aa).

The protein belongs to the GARIN family. In terms of tissue distribution, expressed in testis (at protein level).

It localises to the golgi apparatus. Its function is as follows. RAB2B effector protein required for accurate acrosome formation and normal male fertility. In complex with RAB2A/RAB2B, seems to suppress excessive vesicle trafficking during acrosome formation. This chain is Golgi-associated RAB2 interactor protein 1B, found in Mus musculus (Mouse).